A 424-amino-acid polypeptide reads, in one-letter code: Serine hydroxymethyltransferase (424 aa).

(6S)-5,6,7,8-tetrahydrofolate is bound by residues Leu-118 and 122–124 (GHL). An N6-(pyridoxal phosphate)lysine modification is found at Lys-227. 351 to 353 (SPF) is a (6S)-5,6,7,8-tetrahydrofolate binding site.

It belongs to the SHMT family. As to quaternary structure, homodimer. Requires pyridoxal 5'-phosphate as cofactor.

Its subcellular location is the cytoplasm. It carries out the reaction (6R)-5,10-methylene-5,6,7,8-tetrahydrofolate + glycine + H2O = (6S)-5,6,7,8-tetrahydrofolate + L-serine. It functions in the pathway one-carbon metabolism; tetrahydrofolate interconversion. Its pathway is amino-acid biosynthesis; glycine biosynthesis; glycine from L-serine: step 1/1. Catalyzes the reversible interconversion of serine and glycine with tetrahydrofolate (THF) serving as the one-carbon carrier. This reaction serves as the major source of one-carbon groups required for the biosynthesis of purines, thymidylate, methionine, and other important biomolecules. Also exhibits THF-independent aldolase activity toward beta-hydroxyamino acids, producing glycine and aldehydes, via a retro-aldol mechanism. This Pseudothermotoga lettingae (strain ATCC BAA-301 / DSM 14385 / NBRC 107922 / TMO) (Thermotoga lettingae) protein is Serine hydroxymethyltransferase.